The chain runs to 301 residues: tRNA pseudouridine synthase B (301 aa).

The active-site Nucleophile is the Asp38.

It belongs to the pseudouridine synthase TruB family. Type 1 subfamily.

The catalysed reaction is uridine(55) in tRNA = pseudouridine(55) in tRNA. Functionally, responsible for synthesis of pseudouridine from uracil-55 in the psi GC loop of transfer RNAs. This is tRNA pseudouridine synthase B from Limosilactobacillus reuteri (strain DSM 20016) (Lactobacillus reuteri).